The chain runs to 121 residues: MALSFVSSTRFSKMQYGIWHSGSFTQRVSVRCCEIANEAPRPKSKLQVGSPIIIVEAPKVIKTAASMPCLRANSGLVKPGDVGRIVSRKPKDLWAVRLSIGTYLLDGKYFKALELDEGDSD.

Biogenesis factor component of the plastidial NDH subcomplex A.

The protein localises to the plastid. It localises to the chloroplast. Its subcellular location is the chloroplast stroma. Functionally, required for both formation and activity of the chloroplast NAD(P)H dehydrogenase (NDH) complex of the photosynthetic electron transport chain. Functions in assembly or stabilization of the NDH complex; probably involved, together with CRR1 and CRR6, in the incorporation of NdhJ, NdhM, NdhK and NdhI into the NDH subcomplex A assembly intermediate (NAI500) to produce the complex NAI400. The sequence is that of Protein CHLORORESPIRATORY REDUCTION 42, chloroplastic from Arabidopsis thaliana (Mouse-ear cress).